Reading from the N-terminus, the 236-residue chain is 2-phospho-L-lactate guanylyltransferase (236 aa).

Belongs to the CofC family. Homodimer.

It carries out the reaction (2S)-2-phospholactate + GTP + H(+) = (2S)-lactyl-2-diphospho-5'-guanosine + diphosphate. Its pathway is cofactor biosynthesis; coenzyme F420 biosynthesis. Its function is as follows. Guanylyltransferase that catalyzes the activation of (2S)-2-phospholactate (2-PL) as (2S)-lactyl-2-diphospho-5'-guanosine, via the condensation of 2-PL with GTP. It is involved in the biosynthesis of coenzyme F420, a hydride carrier cofactor. In Natrialba magadii (strain ATCC 43099 / DSM 3394 / CCM 3739 / CIP 104546 / IAM 13178 / JCM 8861 / NBRC 102185 / NCIMB 2190 / MS3) (Natronobacterium magadii), this protein is 2-phospho-L-lactate guanylyltransferase.